Consider the following 1525-residue polypeptide: Receptor-type guanylate cyclase Gyc76C (1525 aa).

Positions 1 to 19 are cleaved as a signal peptide; sequence MTRWPFNLLLLLSVAVRDC. The Extracellular segment spans residues 20–493; sequence SNHRTVLTVG…KKDDTHYTST (474 aa). N-linked (GlcNAc...) asparagine glycans are attached at residues N74, N184, N222, N338, N383, N394, N416, N428, and N458. Residues 494–514 form a helical membrane-spanning segment; that stretch reads VAAVVLGVLLFCSGVITMSIY. Residues 515-1525 are Cytoplasmic-facing; sequence RKWKIELEIE…AAARDRESIV (1011 aa). The Protein kinase domain maps to 547 to 824; it reads PSKVSLMSAQ…SVIRNRLKKM (278 aa). ATP is bound by residues 553–561 and K581; that span reads MSAQSYGSR. Positions 896 to 1026 constitute a Guanylate cyclase domain; the sequence is TIYFSDIVGF…DTVNTASRME (131 aa). Residues D901, I902, and D945 each contribute to the Mg(2+) site. 3 disordered regions span residues 1122–1168, 1192–1217, and 1256–1308; these read GSRR…NGLG, ETNETNCDMDGGSGGVSGSGSGLVRQ, and ESRS…VHSS. Residues 1147-1162 are compositionally biased toward basic and acidic residues; the sequence is ESPRMVSKRDRDRERP. Over residues 1202 to 1212 the composition is skewed to gly residues; it reads GGSGGVSGSGS. A compositionally biased stretch (polar residues) spans 1282–1308; sequence LSKNNSRSLDTGVSLISGNPNGEVHSS.

This sequence belongs to the adenylyl cyclase class-4/guanylyl cyclase family. In terms of assembly, interacts with the semaphorin 1A receptor PlexA; PlexA enhances Gyc76C catalytic activity. Interacts with the PDZ domain-containing protein kermit; kermit increases cell surface expression of Gyc76C. In the adult, widely distributed in the head and thorax with highest levels in the optic lobe and central brain and expression also detected in the retina. Expressed at similar levels in adult head and body. In females, highly expressed in oocytes with lower levels in the digestive tract. In mid-embryogenesis, enriched in the circular visceral mesoderm that overlies the migrating salivary gland and in the fat body that underlies the gland but at background levels in the gland itself. In late embryogenesis, detected in the mature salivary gland, in the somatic body wall muscles and the tendon cells to which the muscles attach, and in the constricting midgut. Also expressed in migrating tracheal cells at mid-embryogenesis and in the developed trachea at the end of embryogenesis with enrichment in the apical domains.

It is found in the cell membrane. The enzyme catalyses GTP = 3',5'-cyclic GMP + diphosphate. Guanylate cyclase involved in the production of the second messenger cGMP. Acts as a receptor for the NPLP1-4 peptide and modulates the innate immune IMD pathway in response to salt stress by inducing nuclear translocation of NF-kappa-B protein Rel which leads to increased expression of the antimicrobial peptide diptericin. Plays a role in Sema-1a-mediated axon repulsion which is required for the correct establishment of neuromuscular connectivity. Required in developing embryonic somatic muscle for correct patterning of ventral and lateral muscles and for localization of integrin beta-ps at developing dorsal muscle myotendinous junctions. Required for invagination, migration and lumen shape of the embryonic salivary gland by regulating the localization of the integrin-binding protein rhea/Talin to the visceral mesoderm surrounding the gland and maintaining the laminin matrix. Required in the developing wing to regulate extracellular matrix (ECM) organization by activating the cGMP-dependent protein kinase For which represses the activity of matrix metalloproteases such as Mmp2 and decreases ECM matrix reorganization. The sequence is that of Receptor-type guanylate cyclase Gyc76C from Drosophila melanogaster (Fruit fly).